Reading from the N-terminus, the 131-residue chain is Large ribosomal subunit protein bL12 (131 aa).

It belongs to the bacterial ribosomal protein bL12 family. As to quaternary structure, homodimer. Part of the ribosomal stalk of the 50S ribosomal subunit. Forms a multimeric L10(L12)X complex, where L10 forms an elongated spine to which 2 to 4 L12 dimers bind in a sequential fashion. Binds GTP-bound translation factors.

Functionally, forms part of the ribosomal stalk which helps the ribosome interact with GTP-bound translation factors. Is thus essential for accurate translation. In Prochlorococcus marinus (strain NATL1A), this protein is Large ribosomal subunit protein bL12.